Here is a 232-residue protein sequence, read N- to C-terminus: Large ribosomal subunit protein uL1 (232 aa).

The protein belongs to the universal ribosomal protein uL1 family. As to quaternary structure, part of the 50S ribosomal subunit.

In terms of biological role, binds directly to 23S rRNA. The L1 stalk is quite mobile in the ribosome, and is involved in E site tRNA release. Its function is as follows. Protein L1 is also a translational repressor protein, it controls the translation of the L11 operon by binding to its mRNA. In Dichelobacter nodosus (strain VCS1703A), this protein is Large ribosomal subunit protein uL1.